The sequence spans 210 residues: Fibrillarin-like rRNA/tRNA 2'-O-methyltransferase (210 aa).

A disordered region spans residues 1–34; sequence MTLPSGVERHDFGGETSLATQGQPVYGERTDGDW. S-adenosyl-L-methionine-binding positions include 71–72, 87–88, 112–113, and 132–135; these read TT, EF, DA, and DVAT.

The protein belongs to the methyltransferase superfamily. Fibrillarin family. Interacts with nop5. Component of box C/D small ribonucleoprotein (sRNP) particles that contain rpl7ae, FlpA and nop5, plus a guide RNA.

Involved in pre-rRNA and tRNA processing. Utilizes the methyl donor S-adenosyl-L-methionine to catalyze the site-specific 2'-hydroxyl methylation of ribose moieties in rRNA and tRNA. Site specificity is provided by a guide RNA that base pairs with the substrate. Methylation occurs at a characteristic distance from the sequence involved in base pairing with the guide RNA. This is Fibrillarin-like rRNA/tRNA 2'-O-methyltransferase from Haloarcula marismortui (strain ATCC 43049 / DSM 3752 / JCM 8966 / VKM B-1809) (Halobacterium marismortui).